The primary structure comprises 361 residues: Putative F-box protein At3g25460 (361 aa).

The F-box domain occupies 1 to 45; sequence MMMPELPEDLLVEILCRVPATSLKRLRSTCKLWNHLYNDKRFKSK.

This Arabidopsis thaliana (Mouse-ear cress) protein is Putative F-box protein At3g25460.